A 137-amino-acid polypeptide reads, in one-letter code: ATP synthase epsilon chain, chloroplastic (137 aa).

It belongs to the ATPase epsilon chain family. As to quaternary structure, F-type ATPases have 2 components, CF(1) - the catalytic core - and CF(0) - the membrane proton channel. CF(1) has five subunits: alpha(3), beta(3), gamma(1), delta(1), epsilon(1). CF(0) has three main subunits: a, b and c.

The protein resides in the plastid. It is found in the chloroplast thylakoid membrane. Functionally, produces ATP from ADP in the presence of a proton gradient across the membrane. The protein is ATP synthase epsilon chain, chloroplastic of Medicago sativa (Alfalfa).